The primary structure comprises 77 residues: Cysteine-rich protein 1 (77 aa).

The LIM zinc-binding domain occupies 2 to 63 (PKCPKCNKEV…HPCYAAMFGP (62 aa)). Residues K9 and K22 each carry the N6-acetyllysine modification. The residue at position 68 (R68) is an Omega-N-methylarginine.

In terms of biological role, seems to have a role in zinc absorption and may function as an intracellular zinc transport protein. The polypeptide is Cysteine-rich protein 1 (CRIP1) (Homo sapiens (Human)).